The chain runs to 333 residues: MNLTLKDFHVPNEWNVKSINDNSFIQECYQKAIEMNIYDKSDEKGKAVMYHALTVCPAFWPTVTYDQLVLSGYLMLWLILFDDDLDTVFIPDDEATEIINRTELIFLEGILPTNPTKKEEFTLFFRNQVLKMSGNRLDMFNLFLNYTIQWIHSIIPLNKTIEPHMDLFLFIRKLNVGVYPLIGLSCIFFSNDKIDQSLFLNPRWLKLCEATSIVTALYNDCVSYAKEVKGNAGVNNCLWFLQKKNNTSIQDTFKYICEKSNMYIKEFQNHEEKLLNQYNNIQPLATLLNSLKYIMNGKYYWSMNTARYASPSSPFIEIQNAVSPDNKLINNEL.

The DDxx(x)D/E motif signature appears at 82 to 87 (DDDLDT). Positions 219–227 (NDCVSYAKE) match the NDxxSxxxD/E motif motif.

Belongs to the terpene synthase family.

The enzyme catalyses (2E,6E)-farnesyl diphosphate = (E)-beta-farnesene + diphosphate. It carries out the reaction (2E,6E)-farnesyl diphosphate = (1S,2S,4R)-beta-elemene + diphosphate. In terms of biological role, terpene synthase that converts its substrate farnesyl diphosphate (FPP) into the sesquiterpene (E)-beta-farnesene as major product. Is also able to convert FPP into delta-elemene, beta-elemene, (E)-beta-caryophyllene, 9-epi-(E)-caryophyllene, and a yet unidentified sesquiterpene. The polypeptide is Terpene synthase 2 (Dictyostelium purpureum (Slime mold)).